The primary structure comprises 1067 residues: SURP and G-patch domain-containing protein 2 (1067 aa).

Ser93 is subject to Phosphoserine. Residues 177–189 (KESRDYDLDHPGE) show a composition bias toward basic and acidic residues. The tract at residues 177 to 199 (KESRDYDLDHPGEVDSVSRSSGQ) is disordered. Ser206 carries the phosphoserine modification. Lys219 participates in a covalent cross-link: Glycyl lysine isopeptide (Lys-Gly) (interchain with G-Cter in SUMO2). A Phosphothreonine modification is found at Thr265. Phosphoserine occurs at positions 267 and 586. An SURP motif 1 repeat occupies 573-616 (IDQLVMRVIQGRLSPRERTLLLQDPAYWFLSDESSLEYKYYKLK). The segment at 668 to 767 (SQGPRGLKAK…CPSANMDAKT (100 aa)) is disordered. Polar residues predominate over residues 680-691 (TTAQQTSLSSGT). Ser740 is modified (phosphoserine). Thr744 is modified (phosphothreonine). Residues 770–813 (TAEKLARFVAQVGPEIEQFSIENSTDNPDLWFLHDQSSSAFKFY) form an SURP motif 2 repeat. Residues 825 to 840 (SFQSTGEAGDSVQSPT) are compositionally biased toward polar residues. Disordered stretches follow at residues 825–944 (SFQS…KSLK) and 967–991 (RIAY…EFSQ). Ser838 carries the phosphoserine modification. A compositionally biased stretch (basic and acidic residues) spans 843 to 856 (KEGKGEPQEGHPEQ). Over residues 866–883 (LPEEEEEDEEESEDEGGE) the composition is skewed to acidic residues. The segment covering 919 to 931 (ASTPGLSQASSGS) has biased composition (polar residues). Residues 975-984 (GRPIAKKKKP) show a composition bias toward basic residues. The Nuclear localization signal signature appears at 980–985 (KKKKPK). The G-patch domain occupies 996-1042 (DKNVGFQMLQKMGWKEGHGLGSLGKGIREPVSVGALSEGEGLGADGP).

It is found in the nucleus. Functionally, may play a role in mRNA splicing. The chain is SURP and G-patch domain-containing protein 2 (Sugp2) from Mus musculus (Mouse).